A 103-amino-acid chain; its full sequence is Large ribosomal subunit protein bL21 (103 aa).

The protein belongs to the bacterial ribosomal protein bL21 family. As to quaternary structure, part of the 50S ribosomal subunit. Contacts protein L20.

In terms of biological role, this protein binds to 23S rRNA in the presence of protein L20. In Yersinia pseudotuberculosis serotype O:1b (strain IP 31758), this protein is Large ribosomal subunit protein bL21.